An 81-amino-acid polypeptide reads, in one-letter code: Small ribosomal subunit protein uS17 (81 aa).

It belongs to the universal ribosomal protein uS17 family. In terms of assembly, part of the 30S ribosomal subunit.

Functionally, one of the primary rRNA binding proteins, it binds specifically to the 5'-end of 16S ribosomal RNA. The polypeptide is Small ribosomal subunit protein uS17 (Trichormus variabilis (strain ATCC 29413 / PCC 7937) (Anabaena variabilis)).